We begin with the raw amino-acid sequence, 603 residues long: Isocitrate dehydrogenase kinase/phosphatase (603 aa).

ATP-binding positions include 327 to 333 (APGIKGL) and Lys-348. The active site involves Asp-383.

It belongs to the AceK family.

The protein localises to the cytoplasm. It catalyses the reaction L-seryl-[isocitrate dehydrogenase] + ATP = O-phospho-L-seryl-[isocitrate dehydrogenase] + ADP + H(+). Functionally, bifunctional enzyme which can phosphorylate or dephosphorylate isocitrate dehydrogenase (IDH) on a specific serine residue. This is a regulatory mechanism which enables bacteria to bypass the Krebs cycle via the glyoxylate shunt in response to the source of carbon. When bacteria are grown on glucose, IDH is fully active and unphosphorylated, but when grown on acetate or ethanol, the activity of IDH declines drastically concomitant with its phosphorylation. The polypeptide is Isocitrate dehydrogenase kinase/phosphatase (Burkholderia mallei (strain ATCC 23344)).